The chain runs to 293 residues: Indole-3-glycerol phosphate synthase (293 aa).

This sequence belongs to the TrpC family.

It carries out the reaction 1-(2-carboxyphenylamino)-1-deoxy-D-ribulose 5-phosphate + H(+) = (1S,2R)-1-C-(indol-3-yl)glycerol 3-phosphate + CO2 + H2O. It participates in amino-acid biosynthesis; L-tryptophan biosynthesis; L-tryptophan from chorismate: step 4/5. The chain is Indole-3-glycerol phosphate synthase from Rippkaea orientalis (strain PCC 8801 / RF-1) (Cyanothece sp. (strain PCC 8801)).